We begin with the raw amino-acid sequence, 310 residues long: MSDTNNHSKNIIHRILTEQINLTSNELDTKSTKEIVNIFSEADKEPQKAVERVIPELINAIDEITSRLKSNGRLFYIGTGTSGRLGVLDASECPPTFCTNPDLVQGIIAGGISSLTTSSEHLEDVSEIAISDLKDRNFSYRDVLIGITASGRTPYVLGALNYSKSISALTISISSVPERDSTLDNDIDIRLITGPEILAGSTRLKAGTATKMALNIISTSVMIKLGKVYGNRMIDLSVSNDKLLDRAIGILFDIGSVDKVTAVQLLKKTNGSVKLSLLIALSGMDVIDAKQLLNDSKGNLRTALIRVKGN.

The region spanning 64 to 227 (ITSRLKSNGR…STSVMIKLGK (164 aa)) is the SIS domain. Catalysis depends on Glu-92, which acts as the Proton donor. Glu-123 is an active-site residue.

This sequence belongs to the GCKR-like family. MurNAc-6-P etherase subfamily. Homodimer.

The catalysed reaction is N-acetyl-D-muramate 6-phosphate + H2O = N-acetyl-D-glucosamine 6-phosphate + (R)-lactate. It participates in amino-sugar metabolism; N-acetylmuramate degradation. In terms of biological role, specifically catalyzes the cleavage of the D-lactyl ether substituent of MurNAc 6-phosphate, producing GlcNAc 6-phosphate and D-lactate. In Prochlorococcus marinus (strain NATL2A), this protein is N-acetylmuramic acid 6-phosphate etherase.